The chain runs to 377 residues: Anhydro-N-acetylmuramic acid kinase (377 aa).

Residue 18-25 (GTSADGID) participates in ATP binding.

It belongs to the anhydro-N-acetylmuramic acid kinase family.

It catalyses the reaction 1,6-anhydro-N-acetyl-beta-muramate + ATP + H2O = N-acetyl-D-muramate 6-phosphate + ADP + H(+). The protein operates within amino-sugar metabolism; 1,6-anhydro-N-acetylmuramate degradation. It participates in cell wall biogenesis; peptidoglycan recycling. Its function is as follows. Catalyzes the specific phosphorylation of 1,6-anhydro-N-acetylmuramic acid (anhMurNAc) with the simultaneous cleavage of the 1,6-anhydro ring, generating MurNAc-6-P. Is required for the utilization of anhMurNAc either imported from the medium or derived from its own cell wall murein, and thus plays a role in cell wall recycling. This chain is Anhydro-N-acetylmuramic acid kinase, found in Xanthomonas oryzae pv. oryzae (strain MAFF 311018).